We begin with the raw amino-acid sequence, 407 residues long: Protein FAM53B (407 aa).

Disordered regions lie at residues 204–286 (SSSM…RPSL) and 306–380 (ITGE…DTEP). 2 stretches are compositionally biased toward basic and acidic residues: residues 264 to 281 (LNEK…DTHK) and 327 to 339 (DAVD…HNLK). The Nuclear localization signal motif lies at 272-275 (KRRR). Residues 357-369 (ITEEVDWNCDDGT) are compositionally biased toward acidic residues.

It belongs to the FAM53 family. As to quaternary structure, interacts with ctnnb1. Predominantly expressed in proliferating cells throughout embryonic development.

The protein resides in the nucleus. Acts as a regulator of Wnt signaling pathway by regulating beta-catenin (ctnnb1) nuclear localization. The chain is Protein FAM53B from Oryzias latipes (Japanese rice fish).